We begin with the raw amino-acid sequence, 86 residues long: Electron transfer flavoprotein regulatory factor 1 (86 aa).

This sequence belongs to the complex I LYR family.

The protein resides in the mitochondrion. Its function is as follows. Acts as a regulator of the electron transfer flavoprotein by promoting the removal of flavin from the ETF holoenzyme (composed of ETFA and ETFB). This Taeniopygia guttata (Zebra finch) protein is Electron transfer flavoprotein regulatory factor 1.